A 443-amino-acid polypeptide reads, in one-letter code: Eukaryotic translation initiation factor 3 subunit E (443 aa).

The 169-residue stretch at 249-417 folds into the PCI domain; it reads LDLFFNAGFI…GTVVMNHPPS (169 aa).

Belongs to the eIF-3 subunit E family. As to quaternary structure, component of the eukaryotic translation initiation factor 3 (eIF-3) complex.

Its subcellular location is the cytoplasm. In terms of biological role, component of the eukaryotic translation initiation factor 3 (eIF-3) complex, which is involved in protein synthesis of a specialized repertoire of mRNAs and, together with other initiation factors, stimulates binding of mRNA and methionyl-tRNAi to the 40S ribosome. The eIF-3 complex specifically targets and initiates translation of a subset of mRNAs involved in cell proliferation. This Neurospora crassa (strain ATCC 24698 / 74-OR23-1A / CBS 708.71 / DSM 1257 / FGSC 987) protein is Eukaryotic translation initiation factor 3 subunit E (int-6).